The sequence spans 187 residues: Threonylcarbamoyl-AMP synthase (187 aa).

Positions 4 to 187 constitute a YrdC-like domain; the sequence is TLTLSEAVTA…DARSGHILRL (184 aa).

The protein belongs to the SUA5 family. TsaC subfamily.

It is found in the cytoplasm. The enzyme catalyses L-threonine + hydrogencarbonate + ATP = L-threonylcarbamoyladenylate + diphosphate + H2O. Required for the formation of a threonylcarbamoyl group on adenosine at position 37 (t(6)A37) in tRNAs that read codons beginning with adenine. Catalyzes the conversion of L-threonine, HCO(3)(-)/CO(2) and ATP to give threonylcarbamoyl-AMP (TC-AMP) as the acyladenylate intermediate, with the release of diphosphate. The protein is Threonylcarbamoyl-AMP synthase of Xylella fastidiosa (strain M12).